A 319-amino-acid polypeptide reads, in one-letter code: Acetyl-coenzyme A carboxylase carboxyl transferase subunit alpha (319 aa).

Residues 35-296 (DLDKEIEQLE…KATLLRQLAE (262 aa)) enclose the CoA carboxyltransferase C-terminal domain.

It belongs to the AccA family. In terms of assembly, acetyl-CoA carboxylase is a heterohexamer composed of biotin carboxyl carrier protein (AccB), biotin carboxylase (AccC) and two subunits each of ACCase subunit alpha (AccA) and ACCase subunit beta (AccD).

The protein localises to the cytoplasm. It catalyses the reaction N(6)-carboxybiotinyl-L-lysyl-[protein] + acetyl-CoA = N(6)-biotinyl-L-lysyl-[protein] + malonyl-CoA. Its pathway is lipid metabolism; malonyl-CoA biosynthesis; malonyl-CoA from acetyl-CoA: step 1/1. Functionally, component of the acetyl coenzyme A carboxylase (ACC) complex. First, biotin carboxylase catalyzes the carboxylation of biotin on its carrier protein (BCCP) and then the CO(2) group is transferred by the carboxyltransferase to acetyl-CoA to form malonyl-CoA. This chain is Acetyl-coenzyme A carboxylase carboxyl transferase subunit alpha, found in Vibrio vulnificus (strain CMCP6).